The primary structure comprises 157 residues: Small ribosomal subunit protein uS7 (157 aa).

It belongs to the universal ribosomal protein uS7 family. As to quaternary structure, part of the 30S ribosomal subunit. Contacts proteins S9 and S11.

Functionally, one of the primary rRNA binding proteins, it binds directly to 16S rRNA where it nucleates assembly of the head domain of the 30S subunit. Is located at the subunit interface close to the decoding center, probably blocks exit of the E-site tRNA. In Caulobacter vibrioides (strain ATCC 19089 / CIP 103742 / CB 15) (Caulobacter crescentus), this protein is Small ribosomal subunit protein uS7.